A 347-amino-acid chain; its full sequence is NADH-ubiquinone oxidoreductase chain 2 (347 aa).

10 helical membrane-spanning segments follow: residues 3-23, 25-45, 66-86, 93-115, 149-169, 178-198, 201-221, 237-257, 274-294, and 325-345; these read PPIL…VMLS, HWLL…PILM, ASML…QWVI, IASI…HFWV, INTN…GWGG, IMAY…TYNP, MILN…LFML, FPLI…LPPL, NMII…YFYL, and LLPP…MLSV.

It belongs to the complex I subunit 2 family. Core subunit of respiratory chain NADH dehydrogenase (Complex I) which is composed of 45 different subunits. Interacts with TMEM242.

Its subcellular location is the mitochondrion inner membrane. It catalyses the reaction a ubiquinone + NADH + 5 H(+)(in) = a ubiquinol + NAD(+) + 4 H(+)(out). Core subunit of the mitochondrial membrane respiratory chain NADH dehydrogenase (Complex I) which catalyzes electron transfer from NADH through the respiratory chain, using ubiquinone as an electron acceptor. Essential for the catalytic activity and assembly of complex I. This Canis lupus (Gray wolf) protein is NADH-ubiquinone oxidoreductase chain 2.